The sequence spans 160 residues: Anaerobic nitrite reductase AHB1 (160 aa).

The region spanning 8 to 157 (VFTEEQEALV…LVAAIKAEMN (150 aa)) is the Globin domain. Positions 41-45 (EIAPT) match the Homodimerization motif. Positions 51, 65, 69, 99, 103, and 104 each coordinate heme b. The Homodimerization motif lies at 111-123 (DEHFEVAKYALLE).

Belongs to the plant globin family. Homodimer. The cofactor is heme b. As to expression, expressed in roots and rosette leaves.

The protein localises to the cytoplasm. It localises to the nucleus. It carries out the reaction Fe(III)-heme b-[protein] + nitric oxide + H2O = Fe(II)-heme b-[protein] + nitrite + 2 H(+). Functionally, phytoglobin that reduces nitrite to nitric oxide (NO) under anoxic conditions (e.g. during flooding or in waterlogged soil). May not function as an oxygen storage or transport protein. Has an unusually high affinity for O(2) through an hexacoordinate heme iron because of a very low dissociation constant. The polypeptide is Anaerobic nitrite reductase AHB1 (Arabidopsis thaliana (Mouse-ear cress)).